The chain runs to 61 residues: Large ribosomal subunit protein uL30 (61 aa).

Belongs to the universal ribosomal protein uL30 family. Part of the 50S ribosomal subunit.

In Chlorobium phaeobacteroides (strain BS1), this protein is Large ribosomal subunit protein uL30.